We begin with the raw amino-acid sequence, 298 residues long: ATP synthase gamma chain (298 aa).

Belongs to the ATPase gamma chain family. In terms of assembly, F-type ATPases have 2 components, CF(1) - the catalytic core - and CF(0) - the membrane proton channel. CF(1) has five subunits: alpha(3), beta(3), gamma(1), delta(1), epsilon(1). CF(0) has three main subunits: a, b and c.

It is found in the cell inner membrane. Its function is as follows. Produces ATP from ADP in the presence of a proton gradient across the membrane. The gamma chain is believed to be important in regulating ATPase activity and the flow of protons through the CF(0) complex. The sequence is that of ATP synthase gamma chain from Francisella tularensis subsp. mediasiatica (strain FSC147).